The primary structure comprises 449 residues: Bifunctional protein GlmU (449 aa).

Residues 1–229 (MKLSAVILAA…EEDIYGINDR (229 aa)) are pyrophosphorylase. UDP-N-acetyl-alpha-D-glucosamine is bound by residues 8–11 (LAAG), K22, Q73, and 78–79 (GT). D102 contributes to the Mg(2+) binding site. UDP-N-acetyl-alpha-D-glucosamine is bound by residues G139, E154, N169, and N227. Mg(2+) is bound at residue N227. The interval 230–250 (VQLAQAENILRQRKNRELMLS) is linker. Residues 251 to 449 (GVSLMDPAST…AGQKHLPRKG (199 aa)) are N-acetyltransferase. UDP-N-acetyl-alpha-D-glucosamine contacts are provided by R332 and K350. The Proton acceptor role is filled by H362. Residues Y365 and N376 each contribute to the UDP-N-acetyl-alpha-D-glucosamine site. Acetyl-CoA contacts are provided by residues A379, 385–386 (NY), S404, A422, and R439.

It in the N-terminal section; belongs to the N-acetylglucosamine-1-phosphate uridyltransferase family. In the C-terminal section; belongs to the transferase hexapeptide repeat family. Homotrimer. The cofactor is Mg(2+).

It localises to the cytoplasm. The catalysed reaction is alpha-D-glucosamine 1-phosphate + acetyl-CoA = N-acetyl-alpha-D-glucosamine 1-phosphate + CoA + H(+). It catalyses the reaction N-acetyl-alpha-D-glucosamine 1-phosphate + UTP + H(+) = UDP-N-acetyl-alpha-D-glucosamine + diphosphate. Its pathway is nucleotide-sugar biosynthesis; UDP-N-acetyl-alpha-D-glucosamine biosynthesis; N-acetyl-alpha-D-glucosamine 1-phosphate from alpha-D-glucosamine 6-phosphate (route II): step 2/2. It functions in the pathway nucleotide-sugar biosynthesis; UDP-N-acetyl-alpha-D-glucosamine biosynthesis; UDP-N-acetyl-alpha-D-glucosamine from N-acetyl-alpha-D-glucosamine 1-phosphate: step 1/1. It participates in bacterial outer membrane biogenesis; LPS lipid A biosynthesis. Catalyzes the last two sequential reactions in the de novo biosynthetic pathway for UDP-N-acetylglucosamine (UDP-GlcNAc). The C-terminal domain catalyzes the transfer of acetyl group from acetyl coenzyme A to glucosamine-1-phosphate (GlcN-1-P) to produce N-acetylglucosamine-1-phosphate (GlcNAc-1-P), which is converted into UDP-GlcNAc by the transfer of uridine 5-monophosphate (from uridine 5-triphosphate), a reaction catalyzed by the N-terminal domain. This Syntrophomonas wolfei subsp. wolfei (strain DSM 2245B / Goettingen) protein is Bifunctional protein GlmU.